Consider the following 83-residue polypeptide: U3-theraphotoxin-Cg1a (83 aa).

The first 23 residues, Met-1–Ala-23, serve as a signal peptide directing secretion. The propeptide occupies Glu-24–Arg-44. 3 disulfides stabilise this stretch: Cys-48-Cys-61, Cys-52-Cys-75, and Cys-69-Cys-80.

Belongs to the neurotoxin 12 (Hwtx-2) family. 03 (juruin) subfamily. In terms of processing, contains 3 disulfide bonds. Two different connectivities are observed in similar proteins (C1-C3, C2-C5, C4-C6 or C1-C4, C2-C5, C3-C6). In terms of tissue distribution, expressed by the venom gland.

It is found in the secreted. Probable ion channel inhibitor. The sequence is that of U3-theraphotoxin-Cg1a from Chilobrachys guangxiensis (Chinese earth tiger tarantula).